The following is a 155-amino-acid chain: Transcription antitermination protein NusB (155 aa).

The protein belongs to the NusB family.

Its function is as follows. Involved in transcription antitermination. Required for transcription of ribosomal RNA (rRNA) genes. Binds specifically to the boxA antiterminator sequence of the ribosomal RNA (rrn) operons. In Vibrio vulnificus (strain CMCP6), this protein is Transcription antitermination protein NusB.